The primary structure comprises 217 residues: MTPKRHPAGPRRLVPRMARGSAPWLLPAFTAAGLAVLTSRGSRTRKALAVPVVALAAGMAWFFRDPDRGPASGRFLSAADGVVQSVDPLPDGRTRIAVFMNPLNVHVNRAPIAGVVTGVEHRPGGFLPAFDKDSERNERVIWTFDTEVGEVTVIQIAGAMVRRIVPYHPVGAKVEQGERIGLIRFGSRVDVYLPPGIAPAVEVGQKVRAGETRLDRD.

The Schiff-base intermediate with substrate; via pyruvic acid role is filled by serine 187. Serine 187 bears the Pyruvic acid (Ser); by autocatalysis mark.

The protein belongs to the phosphatidylserine decarboxylase family. PSD-A subfamily. As to quaternary structure, heterodimer of a large membrane-associated beta subunit and a small pyruvoyl-containing alpha subunit. It depends on pyruvate as a cofactor. Is synthesized initially as an inactive proenzyme. Formation of the active enzyme involves a self-maturation process in which the active site pyruvoyl group is generated from an internal serine residue via an autocatalytic post-translational modification. Two non-identical subunits are generated from the proenzyme in this reaction, and the pyruvate is formed at the N-terminus of the alpha chain, which is derived from the carboxyl end of the proenzyme. The post-translation cleavage follows an unusual pathway, termed non-hydrolytic serinolysis, in which the side chain hydroxyl group of the serine supplies its oxygen atom to form the C-terminus of the beta chain, while the remainder of the serine residue undergoes an oxidative deamination to produce ammonia and the pyruvoyl prosthetic group on the alpha chain.

Its subcellular location is the cell membrane. The enzyme catalyses a 1,2-diacyl-sn-glycero-3-phospho-L-serine + H(+) = a 1,2-diacyl-sn-glycero-3-phosphoethanolamine + CO2. Its pathway is phospholipid metabolism; phosphatidylethanolamine biosynthesis; phosphatidylethanolamine from CDP-diacylglycerol: step 2/2. In terms of biological role, catalyzes the formation of phosphatidylethanolamine (PtdEtn) from phosphatidylserine (PtdSer). This Thermobifida fusca (strain YX) protein is Phosphatidylserine decarboxylase proenzyme.